A 132-amino-acid chain; its full sequence is MSGSLAFHIIMSVTFMVFFFGGLCEARGVNVDLINDIGPNVQLGLHCKSKNKDLGSQSLVSDQHWGFRASLGFWTVTLFFCHFEWENQSKWFDIFVEDRDLTCGDHCVWSIRPSGPCRLTGREKCFPWNNKY.

Positions 1–26 (MSGSLAFHIIMSVTFMVFFFGGLCEA) are cleaved as a signal peptide. Asparagine 87 carries an N-linked (GlcNAc...) asparagine glycan.

The protein belongs to the plant self-incompatibility (S1) protein family.

The protein resides in the secreted. This chain is S-protein homolog 19, found in Arabidopsis thaliana (Mouse-ear cress).